The following is an 82-amino-acid chain: MKLTCVVIVAALLLTACQLITALDCGGTQKHRALRSTIKLSLLRQHRGWCGDPGATCGKLRLYCCSGFCDCYTKTCKDKSSA.

An N-terminal signal peptide occupies residues 1–22; the sequence is MKLTCVVIVAALLLTACQLITA. A propeptide spanning residues 23-47 is cleaved from the precursor; the sequence is LDCGGTQKHRALRSTIKLSLLRQHR. 6'-bromotryptophan is present on Trp49. 3 disulfide bridges follow: Cys50-Cys65, Cys57-Cys69, and Cys64-Cys76. The residue at position 53 (Pro53) is a 4-hydroxyproline. A protein is bound at residue Cys71.

Belongs to the conotoxin O1 superfamily. Post-translationally, cys-71 is a key residue that tethers to the channel by covalent attachment, leading to nearly irreversible inhibition (k(off) very low). In order to determine the solution structure without dimerization, this residue was mutated to Cys. In terms of tissue distribution, expressed by the venom duct.

It is found in the secreted. Functionally, mu-conotoxins block voltage-gated sodium channels (Nav). This toxin (GVIIJ(SSG)) blocks Nav1.1/SCN1A (Kd=11 nM), Nav1.2/SCN2A (Kd=11 nM), Nav1.3/SCN3A (Kd=15 nM), Nav1.4/SCN4A (Kd=4.7 nM), Nav1.6/SCN8A (Kd=360 nM) and Nav1.7/SCN9A (Kd=41 nM). It binds the channel at the newly described site 8, which is composed by two surfaces whose one contains a non-disulfide-bonded cysteine (which is free to covalently bind the toxin Cys-71). It is noteworthy that coexpression of subunits beta-2 or beta-4 (but not beta-1 or beta-3) protects rNav1.1-1.7 against block by the toxin, since these subunits (thanks to their extracellular domain) covalently bind to the key cysteine of the channel, thus preventing the covalent binding of the toxin. The sequence is that of Mu-conotoxin GVIIJ from Conus geographus (Geography cone).